A 251-amino-acid polypeptide reads, in one-letter code: Ubiquinone/menaquinone biosynthesis C-methyltransferase UbiE (251 aa).

S-adenosyl-L-methionine contacts are provided by residues threonine 74, aspartate 95, and 123-124 (NA).

This sequence belongs to the class I-like SAM-binding methyltransferase superfamily. MenG/UbiE family.

It catalyses the reaction a 2-demethylmenaquinol + S-adenosyl-L-methionine = a menaquinol + S-adenosyl-L-homocysteine + H(+). The catalysed reaction is a 2-methoxy-6-(all-trans-polyprenyl)benzene-1,4-diol + S-adenosyl-L-methionine = a 5-methoxy-2-methyl-3-(all-trans-polyprenyl)benzene-1,4-diol + S-adenosyl-L-homocysteine + H(+). Its pathway is quinol/quinone metabolism; menaquinone biosynthesis; menaquinol from 1,4-dihydroxy-2-naphthoate: step 2/2. The protein operates within cofactor biosynthesis; ubiquinone biosynthesis. Methyltransferase required for the conversion of demethylmenaquinol (DMKH2) to menaquinol (MKH2) and the conversion of 2-polyprenyl-6-methoxy-1,4-benzoquinol (DDMQH2) to 2-polyprenyl-3-methyl-6-methoxy-1,4-benzoquinol (DMQH2). In Shewanella baltica (strain OS155 / ATCC BAA-1091), this protein is Ubiquinone/menaquinone biosynthesis C-methyltransferase UbiE.